Here is a 603-residue protein sequence, read N- to C-terminus: Phosphogluconate dehydratase (603 aa).

Cys-154 and Cys-221 together coordinate [4Fe-4S] cluster.

Belongs to the IlvD/Edd family. The cofactor is [4Fe-4S] cluster.

It catalyses the reaction 6-phospho-D-gluconate = 2-dehydro-3-deoxy-6-phospho-D-gluconate + H2O. It participates in carbohydrate metabolism; Entner-Doudoroff pathway. Functionally, catalyzes the dehydration of 6-phospho-D-gluconate to 2-dehydro-3-deoxy-6-phospho-D-gluconate. This Escherichia coli O157:H7 protein is Phosphogluconate dehydratase.